Here is a 391-residue protein sequence, read N- to C-terminus: 3-ketoacyl-CoA thiolase (391 aa).

Cys-95 (acyl-thioester intermediate) is an active-site residue. Active-site proton acceptor residues include His-347 and Cys-377.

The protein belongs to the thiolase-like superfamily. Thiolase family. As to quaternary structure, heterotetramer of two alpha chains (FadB) and two beta chains (FadA).

It is found in the cytoplasm. The catalysed reaction is an acyl-CoA + acetyl-CoA = a 3-oxoacyl-CoA + CoA. It participates in lipid metabolism; fatty acid beta-oxidation. In terms of biological role, catalyzes the final step of fatty acid oxidation in which acetyl-CoA is released and the CoA ester of a fatty acid two carbons shorter is formed. This Pseudomonas putida (strain ATCC 47054 / DSM 6125 / CFBP 8728 / NCIMB 11950 / KT2440) protein is 3-ketoacyl-CoA thiolase.